The chain runs to 261 residues: 14-3-3-like protein A (261 aa).

Belongs to the 14-3-3 family.

This chain is 14-3-3-like protein A, found in Vicia faba (Broad bean).